The primary structure comprises 332 residues: Ornithine carbamoyltransferase, catabolic (332 aa).

Carbamoyl phosphate-binding positions include 60 to 63, Gln-87, Arg-111, and 138 to 141; these read STRT and HPTQ. Residues Asn-170, Asp-230, and 234 to 235 contribute to the L-ornithine site; that span reads SM. Residues 271-272 and Arg-316 each bind carbamoyl phosphate; that span reads CL.

It belongs to the aspartate/ornithine carbamoyltransferase superfamily. OTCase family.

The protein localises to the cytoplasm. The catalysed reaction is carbamoyl phosphate + L-ornithine = L-citrulline + phosphate + H(+). It participates in amino-acid degradation; L-arginine degradation via ADI pathway; carbamoyl phosphate from L-arginine: step 2/2. In terms of biological role, reversibly catalyzes the transfer of the carbamoyl group from carbamoyl phosphate (CP) to the N(epsilon) atom of ornithine (ORN) to produce L-citrulline. This Bacillus thuringiensis subsp. konkukian (strain 97-27) protein is Ornithine carbamoyltransferase, catabolic.